The primary structure comprises 126 residues: Ribulose bisphosphate carboxylase small subunit, chloroplastic 1 (126 aa).

The protein belongs to the RuBisCO small chain family. In terms of assembly, heterohexadecamer of 8 large and 8 small subunits.

It localises to the plastid. Its subcellular location is the chloroplast. Functionally, ruBisCO catalyzes two reactions: the carboxylation of D-ribulose 1,5-bisphosphate, the primary event in carbon dioxide fixation, as well as the oxidative fragmentation of the pentose substrate. Both reactions occur simultaneously and in competition at the same active site. Although the small subunit is not catalytic it is essential for maximal activity. This is Ribulose bisphosphate carboxylase small subunit, chloroplastic 1 from Acetabularia peniculus (Green alga).